A 1221-amino-acid chain; its full sequence is Putative DNA-directed RNA polymerase II subunit RPB2 homolog (1221 aa).

Composition is skewed to low complexity over residues 1-54 (MSRG…SASS) and 692-701 (PAPSSSPSDS). Disordered regions lie at residues 1–63 (MSRG…PMSE) and 673–701 (RGSG…PSDS). Position 823 (Asp823) interacts with Mg(2+). Positions 1174, 1177, 1187, and 1190 each coordinate Zn(2+). The segment at 1174–1190 (CKECGRISDHFEYCRMC) adopts a C4-type zinc-finger fold.

The protein belongs to the RNA polymerase beta chain family.

The enzyme catalyses RNA(n) + a ribonucleoside 5'-triphosphate = RNA(n+1) + diphosphate. In terms of biological role, component of the DNA-dependent RNA polymerase that catalyzes the transcription of DNA into RNA using the four ribonucleoside triphosphates as substrates. Second largest component of RNA polymerase II which synthesizes mRNA precursors and many functional non-coding RNAs. Proposed to contribute to the polymerase catalytic activity and forms the polymerase active center together with the largest subunit. The chain is Putative DNA-directed RNA polymerase II subunit RPB2 homolog from Dryophytes versicolor (chameleon treefrog).